Here is a 294-residue protein sequence, read N- to C-terminus: 4-hydroxy-tetrahydrodipicolinate synthase (294 aa).

Pyruvate is bound at residue Thr-46. Tyr-135 (proton donor/acceptor) is an active-site residue. Lys-164 serves as the catalytic Schiff-base intermediate with substrate. Pyruvate is bound at residue Ile-205.

It belongs to the DapA family. Homotetramer; dimer of dimers.

Its subcellular location is the cytoplasm. The catalysed reaction is L-aspartate 4-semialdehyde + pyruvate = (2S,4S)-4-hydroxy-2,3,4,5-tetrahydrodipicolinate + H2O + H(+). It participates in amino-acid biosynthesis; L-lysine biosynthesis via DAP pathway; (S)-tetrahydrodipicolinate from L-aspartate: step 3/4. Functionally, catalyzes the condensation of (S)-aspartate-beta-semialdehyde [(S)-ASA] and pyruvate to 4-hydroxy-tetrahydrodipicolinate (HTPA). In Nitratiruptor sp. (strain SB155-2), this protein is 4-hydroxy-tetrahydrodipicolinate synthase.